Here is a 184-residue protein sequence, read N- to C-terminus: Trypsin/chymotrypsin inhibitor (184 aa).

2 cysteine pairs are disulfide-bonded: Cys39/Cys84 and Cys136/Cys147.

Belongs to the protease inhibitor I3 (leguminous Kunitz-type inhibitor) family. As to quaternary structure, homodimer.

Inhibits trypsin and alpha-chymotrypsin. The chain is Trypsin/chymotrypsin inhibitor from Alocasia macrorrhizos (Giant taro).